The following is a 222-amino-acid chain: Isoprenyl transferase (222 aa).

Asp12 is a catalytic residue. Asp12 is a Mg(2+) binding site. Residues Gly13–Arg16, Trp17, and Ser57–Glu59 contribute to the substrate site. Residue Asn60 is the Proton acceptor of the active site. Substrate contacts are provided by residues Trp61, Arg63, Arg171, and Arg177 to Ser179. Mg(2+) is bound at residue Glu190.

The protein belongs to the UPP synthase family. As to quaternary structure, homodimer. Requires Mg(2+) as cofactor.

Functionally, catalyzes the condensation of isopentenyl diphosphate (IPP) with allylic pyrophosphates generating different type of terpenoids. This Campylobacter jejuni subsp. jejuni serotype O:2 (strain ATCC 700819 / NCTC 11168) protein is Isoprenyl transferase (uppS).